Reading from the N-terminus, the 401-residue chain is Heat stress transcription factor A-4a (401 aa).

A DNA-binding region spans residues 13 to 107 (LPPFLTKTYE…LMKNIHRRKP (95 aa)). Residues 122-188 (PLTDSERVRM…TMVSFVSQVL (67 aa)) form a hydrophobic repeat HR-A/B region. Residues 207-213 (RKRRFPR) carry the Nuclear localization signal motif. The AHA1 motif lies at 256–265 (IAIWENLVSD). Residues 341–350 (DGFWQQFFSE) carry the AHA2 motif. The segment at 351–373 (NPGSTEQREVQLERKDDKDKAGV) is disordered. Residues 356 to 373 (EQREVQLERKDDKDKAGV) show a composition bias toward basic and acidic residues. The short motif at 388–395 (ITEQLGHL) is the Nuclear export signal element.

The protein belongs to the HSF family. Class A subfamily. As to quaternary structure, homotrimer. Exhibits temperature-dependent phosphorylation.

The protein localises to the cytoplasm. It is found in the nucleus. Functionally, transcriptional activator that specifically binds DNA sequence 5'-AGAAnnTTCT-3' known as heat shock promoter elements (HSE). In Arabidopsis thaliana (Mouse-ear cress), this protein is Heat stress transcription factor A-4a (HSFA4A).